A 522-amino-acid polypeptide reads, in one-letter code: 3'3'-cGAMP-specific phosphodiesterase 2 (522 aa).

A Response regulatory domain is found at 36-160 (CVLLVDDDEQ…QKLRTLLYSM (125 aa)). Asp91 bears the 4-aspartylphosphate mark. Residues 325–522 (LRETSKELVY…FIAIRASLPD (198 aa)) form the HD-GYP domain. A divalent metal cation is bound by residues His382 and Asp383. Lys386 acts as the Proton donor in catalysis. His411, His437, His438, and Asp466 together coordinate a divalent metal cation.

Homodimer. Mn(2+) serves as cofactor.

It carries out the reaction 3',3'-cGAMP + H2O = 5'-pApG-3' + H(+). Phosphodiesterase (PDE) that catalyzes the hydrolysis of 3'3'-cyclic GMP-AMP (3'3'-cGAMP), leading to linear 5'-pApG. Counteracts the function of the 3'3'-cGAMP synthase DncV, and is involved in the modulation of intracellular 3'3'-cGAMP levels. Enhances bacterial chemotaxis and inhibits intestinal colonization in vivo. Thus exerts a crucial role in regulating bacterial infectivity through catalyzing 3'3'-cGAMP degradation. Is specific for 3'3'-cGAMP since it cannot degrade other cGAMP linkage isomers (3'2'-, 2'3'-, and 2'2'-cGAMPs). Is also able to hydrolyze c-di-GMP but not c-di-AMP. In Vibrio cholerae serotype O1 (strain ATCC 39315 / El Tor Inaba N16961), this protein is 3'3'-cGAMP-specific phosphodiesterase 2.